The primary structure comprises 260 residues: Ribonuclease PH (260 aa).

Phosphate-binding positions include R88 and 126–128; that span reads GTR.

It belongs to the RNase PH family. In terms of assembly, homohexameric ring arranged as a trimer of dimers.

It carries out the reaction tRNA(n+1) + phosphate = tRNA(n) + a ribonucleoside 5'-diphosphate. Functionally, phosphorolytic 3'-5' exoribonuclease that plays an important role in tRNA 3'-end maturation. Removes nucleotide residues following the 3'-CCA terminus of tRNAs; can also add nucleotides to the ends of RNA molecules by using nucleoside diphosphates as substrates, but this may not be physiologically important. Probably plays a role in initiation of 16S rRNA degradation (leading to ribosome degradation) during starvation. The polypeptide is Ribonuclease PH (Mycobacterium sp. (strain JLS)).